Consider the following 424-residue polypeptide: Serine--tRNA ligase (424 aa).

230–232 (TAE) is an L-serine binding site. An ATP-binding site is contributed by 261 to 263 (RSE). Glu-284 lines the L-serine pocket. 348-351 (EISS) serves as a coordination point for ATP. Residue Ser-384 participates in L-serine binding.

It belongs to the class-II aminoacyl-tRNA synthetase family. Type-1 seryl-tRNA synthetase subfamily. As to quaternary structure, homodimer. The tRNA molecule binds across the dimer.

The protein resides in the cytoplasm. The catalysed reaction is tRNA(Ser) + L-serine + ATP = L-seryl-tRNA(Ser) + AMP + diphosphate + H(+). The enzyme catalyses tRNA(Sec) + L-serine + ATP = L-seryl-tRNA(Sec) + AMP + diphosphate + H(+). Its pathway is aminoacyl-tRNA biosynthesis; selenocysteinyl-tRNA(Sec) biosynthesis; L-seryl-tRNA(Sec) from L-serine and tRNA(Sec): step 1/1. In terms of biological role, catalyzes the attachment of serine to tRNA(Ser). Is also able to aminoacylate tRNA(Sec) with serine, to form the misacylated tRNA L-seryl-tRNA(Sec), which will be further converted into selenocysteinyl-tRNA(Sec). The chain is Serine--tRNA ligase from Desulfatibacillum aliphaticivorans.